The sequence spans 306 residues: Non-specific ribonucleoside hydrolase RihC (306 aa).

His235 is an active-site residue.

It belongs to the IUNH family. RihC subfamily.

In terms of biological role, hydrolyzes both purine and pyrimidine ribonucleosides with a broad-substrate specificity. The sequence is that of Non-specific ribonucleoside hydrolase RihC from Salmonella enteritidis PT4 (strain P125109).